The following is a 1047-amino-acid chain: Jouberin (1047 aa).

Composition is skewed to basic and acidic residues over residues 1–17, 29–40, and 77–86; these read MEPETPEKVDSAQEKVR, SREKTGIEEKGE, and LLHDDKLASE. Disordered stretches follow at residues 1–40 and 67–181; these read MEPETPEKVDSAQEKVRGKTPTADDSDDSREKTGIEEKGE and EQLT…SRDS. Positions 1–284 are interaction with HAP1; the sequence is MEPETPEKVD…IFNENFPYLL (284 aa). Residues 96–106 show a composition bias toward low complexity; sequence PVPTKPESSPS. A compositionally biased stretch (basic and acidic residues) spans 115–138; it reads GEQKKEGTPEDSQHMEGICSREQD. A compositionally biased stretch (basic residues) spans 149–159; it reads PKPKKTKKKTK. Positions 172–181 are enriched in basic and acidic residues; the sequence is GVHEITSRDS. WD repeat units lie at residues 457–499, 502–541, 545–585, 592–631, 648–687, 691–730, and 735–776; these read AGER…FMRE, GHLNIIYDLDWSKDDRYLVTSSSDGTARVWKNEINSTSTF, PHPS…DAAI, VHKSFVNSICFDDEGHHMYSGDCIGVIVVWDTYVKVNDVQ, FRGVPISYLEVHPNGKRLLIHTKDSTLRIMDLRILAARKF, ANYREKIHSTLTPCGTLLFSGSEDGIVYVWNPETGEQVAM, and PFKS…AQQE. Ser853 is subject to Phosphoserine. The SH3 domain occupies 902-962; that stretch reads DPPPMVVALY…PANHVASETL (61 aa). 2 stretches are compositionally biased toward basic and acidic residues: residues 963–987 and 1013–1040; these read YRDSPPKVKERSPPLTPKEKTKPEK and HSEKGKDQNVEDRGHKVDMETKKSEPVV. Residues 963-1047 form a disordered region; it reads YRDSPPKVKE…PVVRKVTLIE (85 aa). Phosphoserine is present on Ser974.

As to quaternary structure, self-associates. Part of the tectonic-like complex (also named B9 complex). Interacts with MKS1. Interacts with NPHP1; probably as heterodimers and/or AHI1(2):NPHP1(2) heterotetramers. Interacts (via SH3 domain) with the dynamin GTPase DNM2. Interacts with HAP1; probably as AHI1(2):HAP1(2) heterotetramers. Interacts with RAB8A. Interacts with CEND1. Interacts with SPATA7. In terms of tissue distribution, expressed in the retina (at protein level). Highly expressed in the brain. Highly expressed in the testis. Expressed in the kidney, thymus, heart, lung, spleen. Weakly expressed in the liver, stomach, pancreas, and embryo. Strongly expressed during periods of both cortical and cerebellar development.

The protein localises to the cytoplasm. It localises to the cytoskeleton. The protein resides in the cilium basal body. It is found in the microtubule organizing center. Its subcellular location is the centrosome. The protein localises to the centriole. It localises to the cell junction. The protein resides in the adherens junction. In terms of biological role, involved in vesicle trafficking and required for ciliogenesis, formation of primary non-motile cilium, and recruitment of RAB8A to the basal body of primary cilium. Component of the tectonic-like complex, a complex localized at the transition zone of primary cilia and acting as a barrier that prevents diffusion of transmembrane proteins between the cilia and plasma membranes. Involved in neuronal differentiation. As a positive modulator of classical Wnt signaling, may play a crucial role in ciliary signaling during cerebellum embryonic development. The polypeptide is Jouberin (Ahi1) (Mus musculus (Mouse)).